The following is a 258-amino-acid chain: Maintenance of carboxysome distribution protein A (258 aa).

ATP is bound by residues Gly-11, Gly-12, Gln-13, Gly-14, Lys-15, Thr-16, Thr-17, Gln-40, Glu-147, Lys-151, Phe-182, Arg-183, Leu-216, Glu-217, Ser-218, and Tyr-221. Thr-16 provides a ligand contact to Mg(2+).

Belongs to the ParA family. McdA subfamily. As to quaternary structure, homodimerizes in the presence of ATP, making extra nucleotide contacts than with ADP or AMP-PNP. Each subunit binds 1 ATP molecule; Glu-147, Lys-151 and Arg-183 cross the dimer interface to contact ATP in the other subunit, while Phe-182, Arg-183 and Tyr-221 stack with the adenine base in their own subunit. Forms a complex with McdB.

The protein localises to the cytoplasm. It is found in the nucleoid. The catalysed reaction is ATP + H2O = ADP + phosphate + H(+). In terms of biological role, mcdA and McdB together mediate carboxysome (Cb) spacing, size, ultrastructure and probably inheritance in the cell, together they prevent Cb aggregation. McdA is an ATPase that forms dynamic gradients on the nucleoid in response to adapter protein McdB, which associates with carboxysomes. The interplay between McdA gradients on the nucleoid and McdB-bound carboxysomes result in the equal spacing of Cbs along the cell length. Binds DNA saturably and strongly in the presence of Mg(2+)ATP; without ATP, DNA-binding is very poor (tested with a mutant that should not be able to hydrolyze ATP, Asp-38-Ala). Decreasing the NaCl concentration increases DNA binding. Incorrect positioning (aggregation) of carboxysomes results in reduced CO(2) fixation by encapsulated ribulose-1,5-bisphosphate carboxylase (RuBisCO, cbbL/cbbS), which leads to slower growth. The sequence is that of Maintenance of carboxysome distribution protein A from Gloeothece citriformis (strain PCC 7424) (Cyanothece sp. (strain PCC 7424)).